The sequence spans 88 residues: UPF0495 protein DEHA2C16280g (88 aa).

The chain crosses the membrane as a helical span at residues 25 to 47; that stretch reads YPLFAAMGVAVASGCFFTYRHFA.

This sequence belongs to the UPF0495 family.

The protein resides in the membrane. The chain is UPF0495 protein DEHA2C16280g from Debaryomyces hansenii (strain ATCC 36239 / CBS 767 / BCRC 21394 / JCM 1990 / NBRC 0083 / IGC 2968) (Yeast).